The sequence spans 105 residues: Cell division topological specificity factor (105 aa).

Belongs to the MinE family.

In terms of biological role, prevents the cell division inhibition by proteins MinC and MinD at internal division sites while permitting inhibition at polar sites. This ensures cell division at the proper site by restricting the formation of a division septum at the midpoint of the long axis of the cell. The sequence is that of Cell division topological specificity factor from Prochlorococcus marinus (strain MIT 9515).